Here is a 512-residue protein sequence, read N- to C-terminus: Cytochrome P450 monooxygenase ABA1 (512 aa).

A helical membrane pass occupies residues 13–32 (HWLSGILAIATVYLATSYII). Cys458 lines the heme pocket.

The protein belongs to the cytochrome P450 family. It depends on heme as a cofactor.

It is found in the membrane. It participates in hormone biosynthesis. Functionally, cytochrome P450 monooxygenase involved in the biosynthesis of abscisic acid (ABA), a phytohormone that acts antagonistically toward salicylic acid (SA), jasmonic acid (JA) and ethylene (ETH) signaling, to impede plant defense responses. During pathogen-host interaction, ABA plays a dual role in disease severity by increasing plant susceptibility and accelerating pathogenesis in the fungus itself. The first step of the pathway catalyzes the reaction from farnesyl diphosphate to alpha-ionylideneethane performed by the alpha-ionylideneethane synthase ABA3 via a three-step reaction mechanism involving 2 neutral intermediates, beta-farnesene and allofarnesene. The cytochrome P450 monooxygenase ABA1 might then be involved in the conversion of alpha-ionylideneethane to alpha-ionylideneacetic acid. Alpha-ionylideneacetic acid is further converted to abscisic acid in 2 steps involving the cytochrome P450 monooxygenase ABA2 and the short-chain dehydrogenase/reductase ABA4, via the intermediates 1'-deoxy-ABA or 1',4'-trans-diol-ABA, depending on the order of action of these 2 enzymes. ABA2 is responsible for the hydroxylation of carbon atom C-1' and ABA4 might be involved in the oxidation of the C-4' carbon atom. The chain is Cytochrome P450 monooxygenase ABA1 from Pyricularia oryzae (strain Y34) (Rice blast fungus).